The primary structure comprises 289 residues: Thymidylate synthase (289 aa).

DUMP-binding positions include Arg-26 and 151 to 152 (RR). The active-site Nucleophile is the Cys-171. Residues 191–194 (RSGD), Asn-202, and 232–234 (HVY) contribute to the dUMP site. Asp-194 lines the (6R)-5,10-methylene-5,6,7,8-tetrahydrofolate pocket. Ala-288 provides a ligand contact to (6R)-5,10-methylene-5,6,7,8-tetrahydrofolate.

The protein belongs to the thymidylate synthase family. As to quaternary structure, homodimer.

The catalysed reaction is dUMP + (6R)-5,10-methylene-5,6,7,8-tetrahydrofolate = 7,8-dihydrofolate + dTMP. It participates in pyrimidine metabolism; dTTP biosynthesis. This chain is Thymidylate synthase, found in Equus caballus (Horse).